A 256-amino-acid chain; its full sequence is Pimeloyl-[acyl-carrier protein] methyl ester esterase (256 aa).

The AB hydrolase-1 domain maps to 15 to 242 (HLVLLHGWGL…AAHAPFISHP (228 aa)). Substrate is bound by residues tryptophan 22, 82–83 (SL), and 143–147 (FLALQ). Serine 82 serves as the catalytic Nucleophile. Catalysis depends on residues aspartate 207 and histidine 235. Histidine 235 contributes to the substrate binding site.

The protein belongs to the AB hydrolase superfamily. Carboxylesterase BioH family. Monomer.

It localises to the cytoplasm. It carries out the reaction 6-carboxyhexanoyl-[ACP] methyl ester + H2O = 6-carboxyhexanoyl-[ACP] + methanol + H(+). It participates in cofactor biosynthesis; biotin biosynthesis. Functionally, the physiological role of BioH is to remove the methyl group introduced by BioC when the pimeloyl moiety is complete. It allows to synthesize pimeloyl-ACP via the fatty acid synthetic pathway through the hydrolysis of the ester bonds of pimeloyl-ACP esters. The chain is Pimeloyl-[acyl-carrier protein] methyl ester esterase from Salmonella newport (strain SL254).